The primary structure comprises 181 residues: Disulfide bond formation protein B (181 aa).

Over Met1 to Ala13 the chain is Cytoplasmic. Residues Trp14–Tyr30 form a helical membrane-spanning segment. Residues Phe31–Met48 are Periplasmic-facing. Residues Cys40 and Cys43 are joined by a disulfide bond. A helical transmembrane segment spans residues Ala49–Ser64. The Cytoplasmic segment spans residues Gly65 to Trp71. Residues Ala72–Tyr89 form a helical membrane-spanning segment. Residues Asp90–Gly145 lie on the Periplasmic side of the membrane. A disulfide bond links Cys105 and Cys131. The helical transmembrane segment at Trp146–Cys164 threads the bilayer. Residues His165–Lys181 lie on the Cytoplasmic side of the membrane.

This sequence belongs to the DsbB family.

It localises to the cell inner membrane. Required for disulfide bond formation in some periplasmic proteins. Acts by oxidizing the DsbA protein. In Idiomarina loihiensis (strain ATCC BAA-735 / DSM 15497 / L2-TR), this protein is Disulfide bond formation protein B.